A 769-amino-acid polypeptide reads, in one-letter code: Neprilysin-21 (769 aa).

Over 1–26 (MKPENGAATWHPAKRSCLGRLTTLET) the chain is Cytoplasmic. A helical; Signal-anchor for type II membrane protein membrane pass occupies residues 27–47 (LLLVFLGLLITALLSVLFLWL). At 48–769 (WVLDGYKTFT…MNPERKCQVW (722 aa)) the chain is on the extracellular side. The N-linked (GlcNAc...) asparagine glycan is linked to Asn-69. A Peptidase M13 domain is found at 85–769 (VCTSRECVRL…MNPERKCQVW (685 aa)). 5 disulfide bridges follow: Cys-86/Cys-91, Cys-109/Cys-754, Cys-117/Cys-714, Cys-173/Cys-428, and Cys-638/Cys-766. N-linked (GlcNAc...) asparagine glycans are attached at residues Asn-221, Asn-240, Asn-272, Asn-307, Asn-356, Asn-412, and Asn-506. His-601 serves as a coordination point for Zn(2+). Glu-602 is an active-site residue. 2 residues coordinate Zn(2+): His-605 and Glu-663. The active-site Proton donor is the Asp-667. N-linked (GlcNAc...) asparagine glycans are attached at residues Asn-684 and Asn-698.

The protein belongs to the peptidase M13 family. Zn(2+) is required as a cofactor.

The protein resides in the cell membrane. Its function is as follows. Probable cell surface protease. The chain is Neprilysin-21 (nep-21) from Caenorhabditis elegans.